The chain runs to 96 residues: uncharacterized protein (96 aa).

It is found in the mitochondrion. This is an uncharacterized protein from Saccharomyces cerevisiae (strain ATCC 204508 / S288c) (Baker's yeast).